Here is a 61-residue protein sequence, read N- to C-terminus: Large ribosomal subunit protein uL30 (61 aa).

Belongs to the universal ribosomal protein uL30 family. As to quaternary structure, part of the 50S ribosomal subunit.

The chain is Large ribosomal subunit protein uL30 from Corynebacterium urealyticum (strain ATCC 43042 / DSM 7109).